A 332-amino-acid polypeptide reads, in one-letter code: Aquaporin-7-2 (332 aa).

The segment covering 1-40 has biased composition (polar residues); that stretch reads MSGQHQITEQPSGNPLSRTSTLIQEKPLTPTSSHAGTQKQ. Residues 1–46 are disordered; it reads MSGQHQITEQPSGNPLSRTSTLIQEKPLTPTSSHAGTQKQPEAPRQ. Topologically, residues 1–66 are cytoplasmic; sequence MSGQHQITEQ…RHAIRKPMAE (66 aa). A helical membrane pass occupies residues 67–87; sequence FFGVALLIIFGAGSACQVVLS. At 88–100 the chain is on the extracellular side; sequence TNPDVASSARGSF. Residues 101–121 traverse the membrane as a helical segment; sequence LSINFGWAIGIAMGVWVSGGI. Topologically, residues 122–144 are cytoplasmic; it reads SGGHINPAITIAMATYRGFPWCK. Positions 127 to 129 match the NPA 1 motif; the sequence is NPA. Residues 145–165 form a helical membrane-spanning segment; that stretch reads VPSYILAQVLGGVVGAALVYA. The Extracellular portion of the chain corresponds to 166–199; the sequence is NYIHAIDVFEGGHHIRTEATASLFATYALPYMTQ. A helical transmembrane segment spans residues 200–220; the sequence is ASCFFSEFLATAVLSMMVFAL. At 221–230 the chain is on the cytoplasmic side; sequence TDKRNHSPTN. The chain crosses the membrane as a helical span at residues 231 to 251; sequence GLLPFALFILFVGLGASLGME. Over 252–283 the chain is Extracellular; that stretch reads TAYALNPARDFGPRLFLAMAGYGKALFNYRSQ. Residues 257–259 carry the NPA 2 motif; sequence NPA. The helical transmembrane segment at 284–304 threads the bilayer; it reads YWLWAPIIAPVLGAQAGGLLY. Residues 305-332 lie on the Cytoplasmic side of the membrane; sequence DTFLNDGDNSPIKWRCASSQEQQLAEVV.

This sequence belongs to the MIP/aquaporin (TC 1.A.8) family.

It is found in the membrane. The catalysed reaction is H2O(in) = H2O(out). In terms of biological role, water channel required to facilitate the transport of water across membranes. Does not mediate the transport carbon dioxide across the membrane. The sequence is that of Aquaporin-7-2 from Laccaria bicolor (Bicoloured deceiver).